Here is a 318-residue protein sequence, read N- to C-terminus: MGFYHVGQAAFELLTSSFILVGFSDRPHLELIVFVVVLIFYLLTLLGNMTIVLLSALDSRLHTPMYFFLANLSFLDMCFTTGSIPQMLYNLWGPDKTISYVGCAIQLYFVLALGGVECVLLAVMAYDRYAAVCKPLHYTIIMHPRLCGQLASVAWLSGFGNSLIMAPQTLMLPRCGHRRVDHFLCEMPALIGMACVDTMMLEALAFALAIFIILAPLILILISYGYVGGTVLRIKSAAGRKKAFNTCSSHLIVVSLFYGTIIYMYLQPANTYSQDQGKFLTLFYTIVTPSVNPLIYTLRNKDVKEAMKKVLGKGSAEI.

The Extracellular segment spans residues 1–31 (MGFYHVGQAAFELLTSSFILVGFSDRPHLEL). A helical membrane pass occupies residues 32–52 (IVFVVVLIFYLLTLLGNMTIV). Residues 53–63 (LLSALDSRLHT) lie on the Cytoplasmic side of the membrane. The chain crosses the membrane as a helical span at residues 64–84 (PMYFFLANLSFLDMCFTTGSI). Topologically, residues 85 to 103 (PQMLYNLWGPDKTISYVGC) are extracellular. Cysteine 103 and cysteine 185 are joined by a disulfide. Residues 104–124 (AIQLYFVLALGGVECVLLAVM) traverse the membrane as a helical segment. Residues 125-145 (AYDRYAAVCKPLHYTIIMHPR) lie on the Cytoplasmic side of the membrane. Residues 146 to 166 (LCGQLASVAWLSGFGNSLIMA) form a helical membrane-spanning segment. Over 167–202 (PQTLMLPRCGHRRVDHFLCEMPALIGMACVDTMMLE) the chain is Extracellular. The helical transmembrane segment at 203-223 (ALAFALAIFIILAPLILILIS) threads the bilayer. The Cytoplasmic portion of the chain corresponds to 224–245 (YGYVGGTVLRIKSAAGRKKAFN). The helical transmembrane segment at 246–266 (TCSSHLIVVSLFYGTIIYMYL) threads the bilayer. Topologically, residues 267–277 (QPANTYSQDQG) are extracellular. The helical transmembrane segment at 278 to 298 (KFLTLFYTIVTPSVNPLIYTL) threads the bilayer. Residues 299–318 (RNKDVKEAMKKVLGKGSAEI) are Cytoplasmic-facing.

Belongs to the G-protein coupled receptor 1 family.

The protein resides in the cell membrane. In terms of biological role, odorant receptor. The protein is Putative olfactory receptor 2W6 (OR2W6P) of Homo sapiens (Human).